Reading from the N-terminus, the 131-residue chain is Large ribosomal subunit protein bL17 (131 aa).

This sequence belongs to the bacterial ribosomal protein bL17 family. As to quaternary structure, part of the 50S ribosomal subunit. Contacts protein L32.

The protein is Large ribosomal subunit protein bL17 of Herminiimonas arsenicoxydans.